We begin with the raw amino-acid sequence, 122 residues long: Large ribosomal subunit protein uL18 (122 aa).

It belongs to the universal ribosomal protein uL18 family. As to quaternary structure, part of the 50S ribosomal subunit; part of the 5S rRNA/L5/L18/L25 subcomplex. Contacts the 5S and 23S rRNAs.

This is one of the proteins that bind and probably mediate the attachment of the 5S RNA into the large ribosomal subunit, where it forms part of the central protuberance. The polypeptide is Large ribosomal subunit protein uL18 (Desulfitobacterium hafniense (strain Y51)).